The following is a 465-amino-acid chain: ATP synthase subunit beta (465 aa).

Position 148 to 155 (148 to 155) interacts with ATP; that stretch reads GGAGVGKT.

This sequence belongs to the ATPase alpha/beta chains family. In terms of assembly, F-type ATPases have 2 components, CF(1) - the catalytic core - and CF(0) - the membrane proton channel. CF(1) has five subunits: alpha(3), beta(3), gamma(1), delta(1), epsilon(1). CF(0) has three main subunits: a(1), b(2) and c(9-12). The alpha and beta chains form an alternating ring which encloses part of the gamma chain. CF(1) is attached to CF(0) by a central stalk formed by the gamma and epsilon chains, while a peripheral stalk is formed by the delta and b chains.

It is found in the cell inner membrane. The catalysed reaction is ATP + H2O + 4 H(+)(in) = ADP + phosphate + 5 H(+)(out). In terms of biological role, produces ATP from ADP in the presence of a proton gradient across the membrane. The catalytic sites are hosted primarily by the beta subunits. This chain is ATP synthase subunit beta, found in Chromobacterium violaceum (strain ATCC 12472 / DSM 30191 / JCM 1249 / CCUG 213 / NBRC 12614 / NCIMB 9131 / NCTC 9757 / MK).